We begin with the raw amino-acid sequence, 314 residues long: Acetyl-coenzyme A carboxylase carboxyl transferase subunit alpha (314 aa).

The 258-residue stretch at 32 to 289 (EIDMLEASLE…KSAFVAQLDS (258 aa)) folds into the CoA carboxyltransferase C-terminal domain.

Belongs to the AccA family. Acetyl-CoA carboxylase is a heterohexamer composed of biotin carboxyl carrier protein (AccB), biotin carboxylase (AccC) and two subunits each of ACCase subunit alpha (AccA) and ACCase subunit beta (AccD).

It is found in the cytoplasm. The catalysed reaction is N(6)-carboxybiotinyl-L-lysyl-[protein] + acetyl-CoA = N(6)-biotinyl-L-lysyl-[protein] + malonyl-CoA. The protein operates within lipid metabolism; malonyl-CoA biosynthesis; malonyl-CoA from acetyl-CoA: step 1/1. Its function is as follows. Component of the acetyl coenzyme A carboxylase (ACC) complex. First, biotin carboxylase catalyzes the carboxylation of biotin on its carrier protein (BCCP) and then the CO(2) group is transferred by the carboxyltransferase to acetyl-CoA to form malonyl-CoA. The chain is Acetyl-coenzyme A carboxylase carboxyl transferase subunit alpha from Staphylococcus aureus (strain JH9).